The chain runs to 852 residues: SPS-sensor component SSY1 (852 aa).

Topologically, residues 1–285 (MSSVNQIYDL…HIQRKLKVRH (285 aa)) are cytoplasmic. The interval 21-41 (DSHSQEHDTSSSLAKNDTDGT) is disordered. Residues 30 to 41 (SSSLAKNDTDGT) show a composition bias toward polar residues. The helical transmembrane segment at 286-306 (IQMLSIGACFSVGLFLTSGKA) threads the bilayer. The Extracellular segment spans residues 307–329 (FSIAGPFGTLLGFGLTGSIILAT). Residues 330–350 (MLSFTELSTLIPVSSGFSGLA) form a helical membrane-spanning segment. The Cytoplasmic segment spans residues 351–357 (SRFVEDA). The chain crosses the membrane as a helical span at residues 358–378 (FGFALGWTYWISCMLALPAQV). Over 379-400 (SSSTFYLSYYNNVNISKGVTAG) the chain is Extracellular. The helical transmembrane segment at 401-421 (FITLFSAFSIVVNLLDVSIMG) threads the bilayer. Position 422 (Glu-422) is a topological domain, cytoplasmic. Residues 423 to 443 (IVYVAGISKVIIAILMVFTMI) traverse the membrane as a helical segment. Topologically, residues 444 to 500 (ILNAGHGNDIHEGVGFRYWDSSKSVRNLTYGLYRPTFDLADAGEGSKKGISGPKGRF) are extracellular. Residues 501–521 (LATASVMLISTFAFSGVEMTF) traverse the membrane as a helical segment. Topologically, residues 522–540 (LASGEAINPRKTIPSATKR) are cytoplasmic. The helical transmembrane segment at 541 to 561 (TFSIVLISYVFLIFSVGINIY) threads the bilayer. The Extracellular portion of the chain corresponds to 562–623 (SGDPRLLSYF…PWVVALQNFG (62 aa)). The chain crosses the membrane as a helical span at residues 624-644 (LCTFASAFNAILIFFTATAGI). At 645–673 (SSLFSCSRTLYAMSVQRKAPPVFEICSKR) the chain is on the cytoplasmic side. A helical membrane pass occupies residues 674–694 (GVPYVSVIFSSLFSVIAYIAV). Over 695–703 (DQTAIENFD) the chain is Extracellular. Residues 704–724 (VLANVSSASTSIIWMGLNLSF) form a helical membrane-spanning segment. Over 725–755 (LRFYYALKQRKDIISRNDSSYPYKSPFQPYL) the chain is Cytoplasmic. Residues 756 to 776 (AIYGLVGCSLFVIFMGYPNFI) form a helical membrane-spanning segment. Residues 777 to 784 (HHFWSTKA) lie on the Extracellular side of the membrane. The chain crosses the membrane as a helical span at residues 785-805 (FFSAYGGLMFFFISYTAYKVL). Residues 806 to 852 (GTSKIQRLDQLDMDSGRREMDRTDWTEHSQYLGTYRERAKKLVTWLI) lie on the Cytoplasmic side of the membrane.

The protein belongs to the amino acid-polyamine-organocation (APC) superfamily. In terms of assembly, component of the plasma membrane SPS (SSY1-PTR3-SSY5) amino acid sensor complex. Interacts directly with PTR3 and SSY5. Interacts with YCK1.

Its subcellular location is the cell membrane. Functionally, amino acid sensor component of the SPS-sensor system, which regulates the expression of several amino acid-metabolizing enzymes and amino acid- and peptide-permeases in response to extracellular amino acid levels by controlling the activity of two transcription factors, STP1 and STP2. Amino-acid permease homolog that seems to interact directly with the extracellular signaling molecules, but has no amino acid transporter activity. May recruit casein kinases YCK1 and YCK2 to hyperphosphorylate and activate downstream component PTR3 in response to amino acid stimulus. The sequence is that of SPS-sensor component SSY1 (SSY1) from Saccharomyces cerevisiae (strain ATCC 204508 / S288c) (Baker's yeast).